The sequence spans 270 residues: MENPVIIYVISDAIGETAQHIIRAVTAQFSLNKPADIRRHAFIRDESALLETLEEAKATDGIVVQTLVQAKLAEYATNFCVQNNIPNVDLLHTLTAAVEAKTGLKSKQDPGNMRRLDSNYFDRIAAIEFAVKYDDCKDPRGLLDADIVLVGVSRTSKTPLSSFLANQNWKVANVPLVPEIPIPAELFQIPAERIIGLTTTPEKLAQIRKVRLRSIGLDEASSYSSEKRILEELEYGYDTFKKLGCQVIHVEDKAIEETAALITEIITSYH.

151–158 (GVSRTSKT) is an ADP binding site.

It belongs to the pyruvate, phosphate/water dikinase regulatory protein family. PDRP subfamily.

The enzyme catalyses N(tele)-phospho-L-histidyl/L-threonyl-[pyruvate, phosphate dikinase] + ADP = N(tele)-phospho-L-histidyl/O-phospho-L-threonyl-[pyruvate, phosphate dikinase] + AMP + H(+). The catalysed reaction is N(tele)-phospho-L-histidyl/O-phospho-L-threonyl-[pyruvate, phosphate dikinase] + phosphate + H(+) = N(tele)-phospho-L-histidyl/L-threonyl-[pyruvate, phosphate dikinase] + diphosphate. Its function is as follows. Bifunctional serine/threonine kinase and phosphorylase involved in the regulation of the pyruvate, phosphate dikinase (PPDK) by catalyzing its phosphorylation/dephosphorylation. The polypeptide is Putative pyruvate, phosphate dikinase regulatory protein 2 (Listeria monocytogenes serovar 1/2a (strain ATCC BAA-679 / EGD-e)).